A 213-amino-acid chain; its full sequence is Penicillin-binding protein activator LpoB (213 aa).

Positions Met1–Gly19 are cleaved as a signal peptide. A lipid anchor (N-palmitoyl cysteine) is attached at Cys20. Cys20 is lipidated: S-diacylglycerol cysteine. The tract at residues Pro26–Pro71 is disordered. Positions Pro36 to Pro50 are enriched in pro residues.

It belongs to the LpoB family. As to quaternary structure, interacts with PBP1b.

It localises to the cell outer membrane. Functionally, regulator of peptidoglycan synthesis that is essential for the function of penicillin-binding protein 1B (PBP1b). This chain is Penicillin-binding protein activator LpoB, found in Citrobacter koseri (strain ATCC BAA-895 / CDC 4225-83 / SGSC4696).